The following is a 148-amino-acid chain: Calcium-regulated heat stable protein 1 (148 aa).

A compositionally biased stretch (pro residues) spans 1 to 12 (MSSEPPPPPLQP). The disordered stretch occupies residues 1-47 (MSSEPPPPPLQPPTHQTSVGLLDTPRTRDRSPSPLRGNVVPSPLPTR). N-acetylserine is present on S2. S31, S33, and S42 each carry phosphoserine. T46 carries the phosphothreonine modification. A phosphoserine mark is found at S53 and S59. One can recognise a CSD domain in the interval 63-130 (VYKGVCKCFC…KLQAVEVVIT (68 aa)). S147 is subject to Phosphoserine.

Homodimer. Interacts with STYX. Can be phosphorylated by DYRK2 (in vitro). Dephosphorylated by calcineurin in a Ca(2+) dependent manner.

It is found in the cytoplasm. Its subcellular location is the P-body. It localises to the cytoplasmic granule. In terms of biological role, binds mRNA and regulates the stability of target mRNA. The protein is Calcium-regulated heat stable protein 1 (Carhsp1) of Mus musculus (Mouse).